A 428-amino-acid polypeptide reads, in one-letter code: Enolase (428 aa).

Q173 lines the (2R)-2-phosphoglycerate pocket. E217 serves as the catalytic Proton donor. The Mg(2+) site is built by D253, E294, and D320. 4 residues coordinate (2R)-2-phosphoglycerate: K345, R374, S375, and K396. K345 serves as the catalytic Proton acceptor.

This sequence belongs to the enolase family. Mg(2+) is required as a cofactor.

The protein localises to the cytoplasm. Its subcellular location is the secreted. It localises to the cell surface. The enzyme catalyses (2R)-2-phosphoglycerate = phosphoenolpyruvate + H2O. It functions in the pathway carbohydrate degradation; glycolysis; pyruvate from D-glyceraldehyde 3-phosphate: step 4/5. Its function is as follows. Catalyzes the reversible conversion of 2-phosphoglycerate (2-PG) into phosphoenolpyruvate (PEP). It is essential for the degradation of carbohydrates via glycolysis. This is Enolase from Methanosarcina barkeri (strain Fusaro / DSM 804).